Consider the following 309-residue polypeptide: Probable (S)-ureidoglycine aminohydrolase (309 aa).

A signal peptide spans 1–22 (MMLPRLLLLVVASALPLASVAA). Mn(2+) contacts are provided by Glu245, His247, His251, and Gln285. Glu245 serves as a coordination point for substrate. Substrate is bound by residues Gln285, Tyr297, and Lys301.

The protein belongs to the UGHY family. In terms of assembly, homooctamer. The cofactor is Mn(2+).

Its subcellular location is the endoplasmic reticulum. It carries out the reaction (S)-2-ureidoglycine + H2O = (S)-ureidoglycolate + NH4(+). Involved in the catabolism of purine nucleotides. The sequential activity of AAH, UGLYAH and UAH allows a complete purine breakdown without the intermediate generation of urea. The chain is Probable (S)-ureidoglycine aminohydrolase (UGLYAH) from Oryza sativa subsp. japonica (Rice).